The following is a 240-amino-acid chain: Adenosylcobinamide-GDP ribazoletransferase (240 aa).

Transmembrane regions (helical) follow at residues 31-51 (LLYY…ASHL), 62-81 (ALLL…DGLA), 109-129 (IAVV…WVLV), 133-153 (IGAQ…GLFL), and 179-199 (VLLV…LLAL).

It belongs to the CobS family. Requires Mg(2+) as cofactor.

The protein resides in the cell inner membrane. It carries out the reaction alpha-ribazole + adenosylcob(III)inamide-GDP = adenosylcob(III)alamin + GMP + H(+). It catalyses the reaction alpha-ribazole 5'-phosphate + adenosylcob(III)inamide-GDP = adenosylcob(III)alamin 5'-phosphate + GMP + H(+). It participates in cofactor biosynthesis; adenosylcobalamin biosynthesis; adenosylcobalamin from cob(II)yrinate a,c-diamide: step 7/7. Joins adenosylcobinamide-GDP and alpha-ribazole to generate adenosylcobalamin (Ado-cobalamin). Also synthesizes adenosylcobalamin 5'-phosphate from adenosylcobinamide-GDP and alpha-ribazole 5'-phosphate. This Pseudomonas putida (strain ATCC 700007 / DSM 6899 / JCM 31910 / BCRC 17059 / LMG 24140 / F1) protein is Adenosylcobinamide-GDP ribazoletransferase.